The primary structure comprises 91 residues: Progonadoliberin-1 (91 aa).

Positions 1–23 (MEPIPKLLAGLLLLTLCVVGCSS) are cleaved as a signal peptide. At glutamine 24 the chain carries Pyrrolidone carboxylic acid. Glycine amide is present on glycine 33.

This sequence belongs to the GnRH family. The precursor is cleaved by ACE, which removes the Gly-Lys-Arg peptide at the C-terminus, leading to mature hormone. The mature form of Gonadoliberin-1 is also cleaved and degraded by ACE.

The protein resides in the secreted. Stimulates the secretion of gonadotropins; it stimulates the secretion of both luteinizing and follicle-stimulating hormones. This chain is Progonadoliberin-1 (GNRH1), found in Sus scrofa (Pig).